We begin with the raw amino-acid sequence, 256 residues long: Ribosomal RNA small subunit methyltransferase A (256 aa).

Histidine 12, leucine 14, glycine 39, glutamate 60, aspartate 83, and asparagine 101 together coordinate S-adenosyl-L-methionine.

Belongs to the class I-like SAM-binding methyltransferase superfamily. rRNA adenine N(6)-methyltransferase family. RsmA subfamily.

The protein resides in the cytoplasm. It carries out the reaction adenosine(1518)/adenosine(1519) in 16S rRNA + 4 S-adenosyl-L-methionine = N(6)-dimethyladenosine(1518)/N(6)-dimethyladenosine(1519) in 16S rRNA + 4 S-adenosyl-L-homocysteine + 4 H(+). In terms of biological role, specifically dimethylates two adjacent adenosines (A1518 and A1519) in the loop of a conserved hairpin near the 3'-end of 16S rRNA in the 30S particle. May play a critical role in biogenesis of 30S subunits. The sequence is that of Ribosomal RNA small subunit methyltransferase A from Nitrosomonas eutropha (strain DSM 101675 / C91 / Nm57).